The chain runs to 404 residues: Probable tRNA sulfurtransferase (404 aa).

The region spanning 61-166 is the THUMP domain; it reads EAVSERLKDV…SGYSYIMCDE (106 aa). ATP is bound by residues 184–185, 209–210, R266, G288, and Q297; these read LL and HF.

It belongs to the ThiI family.

It is found in the cytoplasm. It catalyses the reaction [ThiI sulfur-carrier protein]-S-sulfanyl-L-cysteine + a uridine in tRNA + 2 reduced [2Fe-2S]-[ferredoxin] + ATP + H(+) = [ThiI sulfur-carrier protein]-L-cysteine + a 4-thiouridine in tRNA + 2 oxidized [2Fe-2S]-[ferredoxin] + AMP + diphosphate. The enzyme catalyses [ThiS sulfur-carrier protein]-C-terminal Gly-Gly-AMP + S-sulfanyl-L-cysteinyl-[cysteine desulfurase] + AH2 = [ThiS sulfur-carrier protein]-C-terminal-Gly-aminoethanethioate + L-cysteinyl-[cysteine desulfurase] + A + AMP + 2 H(+). It functions in the pathway cofactor biosynthesis; thiamine diphosphate biosynthesis. Catalyzes the ATP-dependent transfer of a sulfur to tRNA to produce 4-thiouridine in position 8 of tRNAs, which functions as a near-UV photosensor. Also catalyzes the transfer of sulfur to the sulfur carrier protein ThiS, forming ThiS-thiocarboxylate. This is a step in the synthesis of thiazole, in the thiamine biosynthesis pathway. The sulfur is donated as persulfide by IscS. The sequence is that of Probable tRNA sulfurtransferase from Bacillus cereus (strain ATCC 10987 / NRS 248).